A 260-amino-acid chain; its full sequence is MSIYTLGIDVGSTASKCIILKDGKEIVAKSLVAVGTGTSGPARSISEVLENAHMKKEDMAFTLATGYGRNSLEGIADKQMSELSCHAMGASFIWPNVHTVIDIGGQDVKVIHVENGTMTNFQMNDKCAAGTGRFLDVMANILEVKVSDLAELGAKSTKRVAISSTCTVFAESEVISQLSKGTDKIDIIAGIHRSVASRVIGLANRVGIVKDVVMTGGVAQNYGVRGALEEGLGVEIKTSPLAQYNGALGAALYAYKKAAK.

12–16 lines the ATP pocket; sequence STASK. 2 residues coordinate [4Fe-4S] cluster: Cys-127 and Cys-166. ATP is bound by residues Gln-220 and Gln-243.

It belongs to the HgdC family. As to quaternary structure, homodimer. [4Fe-4S] cluster is required as a cofactor. The cofactor is Mg(2+).

It carries out the reaction ATP + H2O = ADP + phosphate + H(+). It functions in the pathway amino-acid degradation; L-glutamate degradation via hydroxyglutarate pathway; crotonoyl-CoA from L-glutamate: step 4/5. With respect to regulation, inactivated by exposure to air within less than 15 minutes. In terms of biological role, involved in the fermentation of L-glutamate via the hydroxyglutarate pathway. HgdC (CompA) has a very low ATPase activity, whose the role is to activate dehydratase HgdA-HgdB complex and then maintain an appropriate redox state via an ATP-dependent electron transfer. The dehydratase requires only catalytic amounts of ATP and substoichiometric amounts of HgdC (CompA) to be functional. This chain is (R)-2-hydroxyglutaryl-CoA dehydratase activating ATPase, found in Acidaminococcus fermentans (strain ATCC 25085 / DSM 20731 / CCUG 9996 / CIP 106432 / VR4).